A 199-amino-acid polypeptide reads, in one-letter code: WASH complex subunit 3 (199 aa).

Residues 47 to 76 are a coiled coil; sequence VCEEKLSALSLRIQQIETTLNILEAKLSSI. Polar residues predominate over residues 93 to 120; sequence NISNGHLPSQPDAQSVVVSPQSDNNSMN. Disordered stretches follow at residues 93–136 and 170–199; these read NISN…NITT and PDLLETPDAPVPDGEPEAEESSDSESSFSD. A compositionally biased stretch (acidic residues) spans 183–192; sequence GEPEAEESSD.

Belongs to the CCDC53 family. Component of the WASH complex.

The polypeptide is WASH complex subunit 3 (Xenopus laevis (African clawed frog)).